Consider the following 92-residue polypeptide: Ribonuclease P protein component 1 (92 aa).

Belongs to the eukaryotic/archaeal RNase P protein component 1 family. In terms of assembly, consists of a catalytic RNA component and at least 4-5 protein subunits.

It localises to the cytoplasm. It carries out the reaction Endonucleolytic cleavage of RNA, removing 5'-extranucleotides from tRNA precursor.. Its function is as follows. Part of ribonuclease P, a protein complex that generates mature tRNA molecules by cleaving their 5'-ends. This chain is Ribonuclease P protein component 1, found in Desulfurococcus amylolyticus (strain DSM 18924 / JCM 16383 / VKM B-2413 / 1221n) (Desulfurococcus kamchatkensis).